Consider the following 1226-residue polypeptide: Probable DNA-binding protein SNT1 (1226 aa).

2 disordered regions span residues 1-219 (MGYP…YSRS) and 264-331 (LKST…PDNI). Basic residues predominate over residues 11-27 (GDKKRYHYSNNPNRRHP). Over residues 31–64 (YSKNSFPKSSNNGFVSSPTADNSTNPSVTPSTAS) the composition is skewed to polar residues. 2 stretches are compositionally biased toward low complexity: residues 81–103 (PRPS…SSTR) and 116–131 (SSST…NTST). 2 stretches are compositionally biased toward polar residues: residues 132–143 (ITHTNTDIGNSR) and 150–170 (SRYN…SALS). Residue S187 is modified to Phosphoserine. Low complexity predominate over residues 202–211 (NNVSSVNNNS). The span at 264–275 (LKSTHSQSSPSL) shows a compositional bias: polar residues. The segment covering 280-304 (FHDANKLDKPEASVKVETPSKDETK) has biased composition (basic and acidic residues). Position 395 is a phosphoserine (S395). A coiled-coil region spans residues 539 to 591 (DLQKKYEKECEILTKLSENLRKEEIENKRKEHELMEQKRREEGIETEKEKSLR). Over residues 569–590 (EHELMEQKRREEGIETEKEKSL) the composition is skewed to basic and acidic residues. Residues 569–605 (EHELMEQKRREEGIETEKEKSLRHPSSSSSSRRRNRA) form a disordered region. Residues 668 to 720 (DASDNFTDHEHSLFLEGYLIHPKKFGKISHYMGGLRSPEECVLHYYRTKKTVN) form the SANT domain. Residues 732-745 (RKMSAAAKRRKRKE) show a composition bias toward basic residues. Positions 732–796 (RKMSAAAKRR…SEVKGDPLGT (65 aa)) are disordered. The span at 748 to 758 (NDEEVEVDESK) shows a compositional bias: acidic residues. Basic and acidic residues predominate over residues 759–773 (EESTNTIEKEEKSEN). T796 bears the Phosphothreonine mark. Positions 884–938 (APEHKTSYWSVRESQLFPELLKEFGSQWSLISEKLGTKSTTMVRNYYQRNAARNG) constitute an HTH myb-type domain. Residues 911-934 (WSLISEKLGTKSTTMVRNYYQRNA) constitute a DNA-binding region (H-T-H motif). S1037 carries the post-translational modification Phosphoserine. The tract at residues 1172–1194 (SQGTPTFPLPAPRTSPISRAPPK) is disordered.

In terms of assembly, identified in a Set3C complex with SET3, HST1, HOS2, SIF2, CPR1 and HOS4.

The protein resides in the nucleus. In terms of biological role, part of the Set3C complex, which is required to repress early/middle sporulation genes during meiosis. The sequence is that of Probable DNA-binding protein SNT1 (SNT1) from Saccharomyces cerevisiae (strain ATCC 204508 / S288c) (Baker's yeast).